The primary structure comprises 157 residues: Small ribosomal subunit protein uS7 (157 aa).

This sequence belongs to the universal ribosomal protein uS7 family. Part of the 30S ribosomal subunit. Contacts proteins S9 and S11.

Functionally, one of the primary rRNA binding proteins, it binds directly to 16S rRNA where it nucleates assembly of the head domain of the 30S subunit. Is located at the subunit interface close to the decoding center, probably blocks exit of the E-site tRNA. This is Small ribosomal subunit protein uS7 from Caulobacter vibrioides (strain ATCC 19089 / CIP 103742 / CB 15) (Caulobacter crescentus).